The sequence spans 428 residues: MSYLVTIIAFIIVFGVLVTVHEYGHMFFAKRAGIMCPEFAIGMGPKIFSFRKNETLYTIRLLPVGGYVRMAGDGLEEPPVEPGMNVKIKLNEENEITHIILDDHHKFQQIEAIEVKKCDFKDDLFIEGITAYDNERHHFKIARKSFFVENGSLVQIAPRDRQFAHKKPWPKFLTLFAGPLFNFILALVLFIGLAYYQGTPTSTVEQVADKYPAQQAGIQKGDKIVQIGKYKISEFDDVDKALDKVKDNKTTVKFERDGKTKSVELTPKKTERKLTKVSSETKYVLGFQPASEHTLFKPIVYGFKSFLIGSTYIFSAVVGMLASIFTGGFSFDMLNGPVGIYHNVDSVVKAGIISLIGYTALLSVNLGIMNLIPIPALDGGRILFVIYEAIFRKPVNKKAETTIIAIGAIFMVVIMILVTWNDIRRYFL.

A Zn(2+)-binding site is contributed by histidine 21. Residue glutamate 22 is part of the active site. Histidine 25 is a Zn(2+) binding site. 4 consecutive transmembrane segments (helical) span residues 172-194 (FLTL…IGLA), 309-331 (GSTY…GFSF), 352-374 (IISL…LIPI), and 401-420 (TTII…LVTW). The 84-residue stretch at 186–269 (ALVLFIGLAY…TKSVELTPKK (84 aa)) folds into the PDZ domain.

This sequence belongs to the peptidase M50B family. Zn(2+) serves as cofactor.

It is found in the cell membrane. The polypeptide is Putative zinc metalloprotease SAR1238 (Staphylococcus aureus (strain MRSA252)).